We begin with the raw amino-acid sequence, 723 residues long: Polyribonucleotide nucleotidyltransferase (723 aa).

Residues aspartate 488 and aspartate 494 each contribute to the Mg(2+) site. Residues 555–614 (PKIITLNIKPEKIKDVIGPGGKQINAIIDETGVKIDIEQDGTVYIASQDQAMNRKAIAII) enclose the KH domain. The S1 motif domain occupies 624-692 (GEVYTGKVRR…QQGRVNLSRK (69 aa)). The tract at residues 692-723 (KALLEKKEQPEGDKKPQAEKKFYPKTKKPESK) is disordered. Basic and acidic residues predominate over residues 693 to 723 (ALLEKKEQPEGDKKPQAEKKFYPKTKKPESK).

It belongs to the polyribonucleotide nucleotidyltransferase family. The cofactor is Mg(2+).

The protein localises to the cytoplasm. It catalyses the reaction RNA(n+1) + phosphate = RNA(n) + a ribonucleoside 5'-diphosphate. Functionally, involved in mRNA degradation. Catalyzes the phosphorolysis of single-stranded polyribonucleotides processively in the 3'- to 5'-direction. This is Polyribonucleotide nucleotidyltransferase from Listeria monocytogenes serovar 1/2a (strain ATCC BAA-679 / EGD-e).